Reading from the N-terminus, the 880-residue chain is EP-cadherin (880 aa).

The first 28 residues, 1 to 28 (MGSTRLRNASVWLCGLLCLLQVVPSINA), serve as a signal peptide directing secretion. The propeptide occupies 29–155 (DVSGCKPGFS…THTGLKRKKR (127 aa)). N-linked (GlcNAc...) asparagine glycosylation occurs at Asn61. 5 Cadherin domains span residues 156-263 (DWVI…RPKF), 264-376 (TQDV…APIF), 377-487 (DPKT…APFF), 488-593 (VPAV…DNGP), and 594-704 (VPSP…GFDL). Topologically, residues 156 to 703 (DWVIPPIKVS…CQEKLVGGFD (548 aa)) are extracellular. O-linked (GalNAc...) threonine glycans are attached at residues Thr343, Thr382, and Thr400. Asn425 is a glycosylation site (N-linked (GlcNAc...) asparagine). O-linked (GalNAc...) threonine glycosylation is found at Thr428, Thr469, Thr471, Thr473, and Thr475. Asn558 is a glycosylation site (N-linked (GlcNAc...) asparagine). O-linked (GalNAc...) threonine glycosylation is found at Thr562, Thr576, Thr578, and Thr580. 2 cysteine pairs are disulfide-bonded: Cys603–Cys687 and Cys685–Cys694. Residue Asn681 is glycosylated (N-linked (GlcNAc...) asparagine). The chain crosses the membrane as a helical span at residues 704 to 728 (LPIILVILGSVLALLILFLLLLLFL). Topologically, residues 729–880 (KRKKVVKEPL…DMYGGDDDEE (152 aa)) are cytoplasmic. The interval 790 to 826 (PAPHYRPRPSNPDEIGNFIDENLDAADNDPTAPPYDS) is disordered.

As to quaternary structure, interacts with CTNNB1.

The protein resides in the cell membrane. Cadherins are calcium-dependent cell adhesion proteins. They preferentially interact with themselves in a homophilic manner in connecting cells; cadherins may thus contribute to the sorting of heterogeneous cell types. This is EP-cadherin from Xenopus laevis (African clawed frog).